A 156-amino-acid chain; its full sequence is Small ribosomal subunit protein uS7 (156 aa).

Belongs to the universal ribosomal protein uS7 family. As to quaternary structure, part of the 30S ribosomal subunit. Contacts proteins S9 and S11.

One of the primary rRNA binding proteins, it binds directly to 16S rRNA where it nucleates assembly of the head domain of the 30S subunit. Is located at the subunit interface close to the decoding center, probably blocks exit of the E-site tRNA. The chain is Small ribosomal subunit protein uS7 from Bartonella quintana (strain Toulouse) (Rochalimaea quintana).